Here is a 351-residue protein sequence, read N- to C-terminus: Translation initiation factor eIF2B subunit beta (351 aa).

It belongs to the eIF-2B alpha/beta/delta subunits family. Component of the translation initiation factor 2B (eIF2B) complex which is a heterodecamer of two sets of five different subunits: alpha, beta, gamma, delta and epsilon. Subunits alpha, beta and delta comprise a regulatory subcomplex and subunits epsilon and gamma comprise a catalytic subcomplex. Within the complex, the hexameric regulatory complex resides at the center, with the two heterodimeric catalytic subcomplexes bound on opposite sides.

The protein resides in the cytoplasm. The protein localises to the cytosol. Its activity is regulated as follows. Activated by the chemical integrated stress response (ISR) inhibitor ISRIB which stimulates guanine nucleotide exchange factor activity for both phosphorylated and unphosphorylated eIF2. Acts as a component of the translation initiation factor 2B (eIF2B) complex, which catalyzes the exchange of GDP for GTP on eukaryotic initiation factor 2 (eIF2) gamma subunit. Its guanine nucleotide exchange factor activity is repressed when bound to eIF2 complex phosphorylated on the alpha subunit, thereby limiting the amount of methionyl-initiator methionine tRNA available to the ribosome and consequently global translation is repressed. The protein is Translation initiation factor eIF2B subunit beta (Eif2b2) of Mus musculus (Mouse).